The sequence spans 493 residues: Glutamate--tRNA ligase (493 aa).

Positions 10–20 match the 'HIGH' region motif; the sequence is PSPTGDPHVGT. Residues 251 to 255 carry the 'KMSKS' region motif; sequence KLSKR. Residue K254 participates in ATP binding.

This sequence belongs to the class-I aminoacyl-tRNA synthetase family. Glutamate--tRNA ligase type 1 subfamily. Monomer.

The protein resides in the cytoplasm. It catalyses the reaction tRNA(Glu) + L-glutamate + ATP = L-glutamyl-tRNA(Glu) + AMP + diphosphate. In terms of biological role, catalyzes the attachment of glutamate to tRNA(Glu) in a two-step reaction: glutamate is first activated by ATP to form Glu-AMP and then transferred to the acceptor end of tRNA(Glu). In Pseudomonas putida (strain ATCC 700007 / DSM 6899 / JCM 31910 / BCRC 17059 / LMG 24140 / F1), this protein is Glutamate--tRNA ligase.